A 635-amino-acid polypeptide reads, in one-letter code: MAKVIGIDLGTTNSCVAVMDGGTPKVIENSEGARTTPSIVAFTKDGERLIGQPAKRQAVTNPDNTIFAVKRLIGRRFDDPMTQKDTELVPYTITKGKNGDAWVKAGGQDYSPSQISAFTLQKMKETAEAYLGETVTQAVITVPAYFNDAQRQATKDAGQIAGLEVLRIINEPTAAALAYGLDKQDGKTIAVYDLGGGTFDISILEIGDGVFEVKSTNGDTFLGGEDFDTAVVEYLADKFKAKEGMDLKTDKLALQRLKEAAEKAKIELSSAQTTEINLPFITARMEGGATTPLHLVETVTRADLEKLVAGLIQRTLDPCKKALADAGISAKEIDDVVLVGGMTRMPKVREVVKDFFGKEPHTGVNPDEVVAMGAAIQAGVLQGDVKDVLLLDVTPLSLGIETLGGIMTKMIDRNTTIPTKKSQVYSTAEDNQQAVTIRVFQGEREMAQDNKLLGQFDLVGIPPARRGVPQIEVTFDIDANGIVNVSAKDKGTGKEQQIRIQASGGLSDADIDQMVRDAEKFAEEDKKRRAAAEAKNNAESLIHATERQLEENGDKVDAGLKAEIEAAIAEAKTAVESGDIDAMNAKAQALTDKAMKMGQAIYEKEQATAASPGAEAPKADDDVVDAEFSEVDENK.

Residue T198 is modified to Phosphothreonine; by autocatalysis. The interval 606–635 is disordered; it reads QATAASPGAEAPKADDDVVDAEFSEVDENK. Positions 622-635 are enriched in acidic residues; it reads DVVDAEFSEVDENK.

Belongs to the heat shock protein 70 family.

Its function is as follows. Acts as a chaperone. The polypeptide is Chaperone protein DnaK (Novosphingobium aromaticivorans (strain ATCC 700278 / DSM 12444 / CCUG 56034 / CIP 105152 / NBRC 16084 / F199)).